A 302-amino-acid chain; its full sequence is Enoyl-CoA delta isomerase 1, mitochondrial (302 aa).

A mitochondrion-targeting transit peptide spans 1–41 (MALVASVRVPARVLLRAGARLPGAALGRTERAAGGGDGARR). Position 61 is an N6-acetyllysine; alternate (lysine 61). Residue lysine 61 is modified to N6-succinyllysine; alternate. The residue at position 84 (lysine 84) is an N6-succinyllysine. Lysine 89 bears the N6-acetyllysine mark. Substrate is bound by residues 106-110 (AGLDL), glycine 153, and asparagine 177. Lysine 283 carries the post-translational modification N6-acetyllysine; alternate. Lysine 283 bears the N6-succinyllysine; alternate mark. Lysine 288 carries the post-translational modification N6-succinyllysine.

The protein belongs to the enoyl-CoA hydratase/isomerase family. As to quaternary structure, homotrimer. In terms of tissue distribution, expressed in liver (at protein level).

It localises to the mitochondrion matrix. The enzyme catalyses a (3Z)-enoyl-CoA = a 4-saturated (2E)-enoyl-CoA. It catalyses the reaction a (3E)-enoyl-CoA = a 4-saturated (2E)-enoyl-CoA. It carries out the reaction (3Z)-octenoyl-CoA = (2E)-octenoyl-CoA. The catalysed reaction is (2E)-tetradecenoyl-CoA = (3Z)-tetradecenoyl-CoA. The enzyme catalyses (3Z)-dodecenoyl-CoA = (2E)-dodecenoyl-CoA. It catalyses the reaction (3Z)-hexenoyl-CoA = (2E)-hexenoyl-CoA. It carries out the reaction (3Z)-decenoyl-CoA = (2E)-decenoyl-CoA. Its pathway is lipid metabolism; fatty acid beta-oxidation. Functionally, key enzyme of fatty acid beta-oxidation. Able to isomerize both 3-cis (3Z) and 3-trans (3E) double bonds into the 2-trans (2E) form in a range of enoyl-CoA species, with a preference for (3Z)-enoyl-CoAs over (3E)-enoyl-CoAs. The catalytic efficiency of this enzyme is not affected by the fatty acyl chain length. This chain is Enoyl-CoA delta isomerase 1, mitochondrial (ECI1), found in Homo sapiens (Human).